A 570-amino-acid polypeptide reads, in one-letter code: DNA polymerase/3'-5' exonuclease PolX (570 aa).

The segment at 1 to 315 (MHKKDIIRLL…PLIPPEIRES (315 aa)) is DNA polymerase type-X. A divalent metal cation contacts are provided by Asp-193, Asp-195, and Asp-240. The interval 333–570 (QIKGDLHMHS…DVEAFLKRND (238 aa)) is 3'-5' exonuclease. Positions 339, 341, 371, 410, 437, 465, 526, and 528 each coordinate Mn(2+).

This sequence in the N-terminal section; belongs to the DNA polymerase type-X family. In the C-terminal section; belongs to the PHP family. In terms of assembly, monomer. Mn(2+) is required as a cofactor. Requires Mg(2+) as cofactor.

It catalyses the reaction DNA(n) + a 2'-deoxyribonucleoside 5'-triphosphate = DNA(n+1) + diphosphate. The catalysed reaction is Exonucleolytic cleavage in the 3'- to 5'-direction to yield nucleoside 5'-phosphates.. With respect to regulation, the polymerization activity is inhibited in the presence of 2'-3'-dideoxynucleoside 5'-triphosphate (ddNTP). Its function is as follows. Strictly DNA-template-directed DNA polymerase, preferentially acting on DNA structures containing gaps from one to a few nucleotides and bearing a phosphate group at the 5' end of the downstream DNA. The fact that PolX is able to conduct filling of a single-nucleotide gap, allowing further sealing of the resulting nick by a DNA ligase, points to a putative role in base excision repair (BER) during the B.subtilis life cycle. Moreover, also possesses a 3'-5' exonuclease activity able to edit unpaired 3'-termini in a gapped DNA substrate and likely involved in resecting unannealed 3'-termini during DNA repair. The same PolX molecule could perform the subsequent gap-filling step. Does not display 5'-deoxyribose 5'-phosphate (dRP) lyase activity, as predicted by the lack of the lysine and tyrosine residues responsible for the dRP lyase activity in some other PolX members. This Bacillus subtilis (strain 168) protein is DNA polymerase/3'-5' exonuclease PolX (polX).